The chain runs to 76 residues: Conotoxin Cal5a L1 (76 aa).

The first 22 residues, 1 to 22 (MRFYIGLMAALMLTSILRTDSA), serve as a signal peptide directing secretion. Positions 23-42 (SVDQTGAEGGLALIERVIRQ) are excised as a propeptide. A 4-hydroxyproline modification is found at P50. P58 is modified (4-hydroxyproline; in form cal5a, and form cal5b). A 4-hydroxyproline; in form cal5a, form cal5b, and form cal5c modification is found at P62. P64 carries the 4-hydroxyproline; in form cal5a, form cal5b, form cal5c, and form cal5d modification.

Contains 2 disulfide bonds that can be either 'C1-C3, C2-C4' or 'C1-C4, C2-C3', since these disulfide connectivities have been observed for conotoxins with cysteine framework V (for examples, see AC P0DQQ7 and AC P81755). In terms of processing, five different peptides have been described after total venom examination by HPLC-MS. Cal5a is the longest. Cal5b-Cal5e are identical in length but are differentially hydroxylated. It is possible that hydroxylation and proteolysis at position 53 are incomplete in some of these peptides. Expressed by the venom duct.

The protein localises to the secreted. Functionally, probable neurotoxin with unknown target. Possibly targets ion channels. The sequence is that of Conotoxin Cal5a L1 from Californiconus californicus (California cone).